The sequence spans 657 residues: 1-deoxy-D-xylulose-5-phosphate synthase (657 aa).

Thiamine diphosphate is bound by residues H73 and 113–115 (SHA). Position 145 (D145) interacts with Mg(2+). Residues 146–147 (GA), N175, Y293, and E375 contribute to the thiamine diphosphate site. Position 175 (N175) interacts with Mg(2+).

Belongs to the transketolase family. DXPS subfamily. As to quaternary structure, homodimer. Mg(2+) serves as cofactor. It depends on thiamine diphosphate as a cofactor.

It catalyses the reaction D-glyceraldehyde 3-phosphate + pyruvate + H(+) = 1-deoxy-D-xylulose 5-phosphate + CO2. It functions in the pathway metabolic intermediate biosynthesis; 1-deoxy-D-xylulose 5-phosphate biosynthesis; 1-deoxy-D-xylulose 5-phosphate from D-glyceraldehyde 3-phosphate and pyruvate: step 1/1. Its function is as follows. Catalyzes the acyloin condensation reaction between C atoms 2 and 3 of pyruvate and glyceraldehyde 3-phosphate to yield 1-deoxy-D-xylulose-5-phosphate (DXP). The polypeptide is 1-deoxy-D-xylulose-5-phosphate synthase (Paenarthrobacter aurescens (strain TC1)).